A 145-amino-acid polypeptide reads, in one-letter code: MYPAHLLVLLAVCVSLLGASAIPPLPLNLVQFTYLIQCANKGSRPSYHYADYGCYCGAGGSGTPVDELDRCCKIHDDCYGEAEKMGCYPKLTMYNYYCGTEGPYCNTKTDCQRYVCACDLKAAKCFARSPYNNKNYNIDTSKRCK.

The signal sequence occupies residues 1 to 21 (MYPAHLLVLLAVCVSLLGASA). The propeptide occupies 22 to 27 (IPPLPL). Disulfide bonds link Cys38/Cys98, Cys54/Cys144, Cys56/Cys72, Cys71/Cys125, Cys78/Cys118, Cys87/Cys111, and Cys105/Cys116. Ca(2+) is bound by residues Tyr55, Gly57, and Gly59. His75 is a catalytic residue. Asp76 contributes to the Ca(2+) binding site. Asp119 is a catalytic residue.

The protein belongs to the phospholipase A2 family. Group I subfamily. D49 sub-subfamily. Requires Ca(2+) as cofactor. Expressed by the venom gland.

It is found in the secreted. The enzyme catalyses a 1,2-diacyl-sn-glycero-3-phosphocholine + H2O = a 1-acyl-sn-glycero-3-phosphocholine + a fatty acid + H(+). Functionally, PLA2 catalyzes the calcium-dependent hydrolysis of the 2-acyl groups in 3-sn-phosphoglycerides. The protein is Basic phospholipase A2 GL1-1 of Laticauda semifasciata (Black-banded sea krait).